The chain runs to 714 residues: Protein HAPLESS 2-B (714 aa).

Residues 1–33 (MAPRRRRRAARSSRPLLLALLAAAVNNFAPAGG) form the signal peptide. Residues 34 to 552 (VEVLAKSRLE…FFTGTTCSTR (519 aa)) lie on the Extracellular side of the membrane. Disulfide bonds link Cys45-Cys59, Cys134-Cys164, Cys146-Cys194, Cys165-Cys321, Cys167-Cys177, Cys304-Cys328, and Cys441-Cys479. The helical transmembrane segment at 553–573 (CWSFLKFVIHGLLLVAVLWLL) threads the bilayer. Residues 574–714 (HRKGLFDPLY…HGDRRHHAWH (141 aa)) are Cytoplasmic-facing. The disordered stretch occupies residues 597–619 (RARRRHKRAHSHRHSHHHDAHKR). A compositionally biased stretch (basic residues) spans 598-619 (ARRRHKRAHSHRHSHHHDAHKR).

The protein belongs to the HAP2/GCS1 family.

The protein resides in the endoplasmic reticulum membrane. Its subcellular location is the cell membrane. In terms of biological role, required for male fertility. Plays a role in pollen tube guidance and successful gamete attachment. Essential for the fusion of gametes during double fertilization, where one male gamete fuses with the egg to produce a zygote, and another male gamete fuses with the central cell to produce the endosperm. Mediates the fusion of cell membranes. Not required for pollen tube outgrowth. The protein is Protein HAPLESS 2-B (HAP2B) of Oryza sativa subsp. japonica (Rice).